Consider the following 276-residue polypeptide: Putative metal-binding protein CT_415 (276 aa).

The N-terminal stretch at 1-18 (MRLLFLLLFSLGITCSYG) is a signal peptide. Positions 59, 121, 185, and 256 each coordinate a divalent metal cation.

This sequence belongs to the bacterial solute-binding protein 9 family.

It is found in the periplasm. In terms of biological role, part of an ATP-binding cassette (ABC) transport system involved in metal import. Binds a metal with high affinity and specificity and delivers it to the membrane permease for translocation into the cytoplasm. This is Putative metal-binding protein CT_415 from Chlamydia trachomatis serovar D (strain ATCC VR-885 / DSM 19411 / UW-3/Cx).